The following is a 122-amino-acid chain: Large ribosomal subunit protein bL12 (122 aa).

The protein belongs to the bacterial ribosomal protein bL12 family. In terms of assembly, homodimer. Part of the ribosomal stalk of the 50S ribosomal subunit. Forms a multimeric L10(L12)X complex, where L10 forms an elongated spine to which 2 to 4 L12 dimers bind in a sequential fashion. Binds GTP-bound translation factors.

In terms of biological role, forms part of the ribosomal stalk which helps the ribosome interact with GTP-bound translation factors. Is thus essential for accurate translation. The chain is Large ribosomal subunit protein bL12 from Blochmanniella pennsylvanica (strain BPEN).